A 465-amino-acid polypeptide reads, in one-letter code: Argininosuccinate lyase (465 aa).

It belongs to the lyase 1 family. Argininosuccinate lyase subfamily.

It localises to the cytoplasm. The catalysed reaction is 2-(N(omega)-L-arginino)succinate = fumarate + L-arginine. It functions in the pathway amino-acid biosynthesis; L-arginine biosynthesis; L-arginine from L-ornithine and carbamoyl phosphate: step 3/3. The chain is Argininosuccinate lyase from Deinococcus deserti (strain DSM 17065 / CIP 109153 / LMG 22923 / VCD115).